The sequence spans 205 residues: Recombination protein RecR (205 aa).

The segment at 59–74 (CARCNTFCEGGLCDIC) adopts a C4-type zinc-finger fold. One can recognise a Toprim domain in the interval 82-177 (RRLMVVHMPA…KVSRLSQGIP (96 aa)).

Belongs to the RecR family.

In terms of biological role, may play a role in DNA repair. It seems to be involved in an RecBC-independent recombinational process of DNA repair. It may act with RecF and RecO. The sequence is that of Recombination protein RecR from Neisseria gonorrhoeae (strain ATCC 700825 / FA 1090).